A 363-amino-acid polypeptide reads, in one-letter code: Holliday junction branch migration complex subunit RuvB (363 aa).

Residues 1-32 (MSDVERTEFEIPGGIPPRRNGGQGRAADTNVD) form a disordered region. Residues 27-207 (ADTNVDANLK…FGFTAQMEFY (181 aa)) are large ATPase domain (RuvB-L). ATP contacts are provided by residues Leu-46, Arg-47, Gly-88, Lys-91, Thr-92, Thr-93, 154–156 (EDF), Arg-197, Tyr-207, and Arg-244. Thr-92 is a Mg(2+) binding site. The small ATPAse domain (RuvB-S) stretch occupies residues 208–278 (DVPDLTKVVK…AANAALIVFD (71 aa)). Residues 281–363 (EVGLDRLDRA…EPPEGTIGDY (83 aa)) form a head domain (RuvB-H) region. DNA-binding residues include Arg-336 and Arg-341.

This sequence belongs to the RuvB family. As to quaternary structure, homohexamer. Forms an RuvA(8)-RuvB(12)-Holliday junction (HJ) complex. HJ DNA is sandwiched between 2 RuvA tetramers; dsDNA enters through RuvA and exits via RuvB. An RuvB hexamer assembles on each DNA strand where it exits the tetramer. Each RuvB hexamer is contacted by two RuvA subunits (via domain III) on 2 adjacent RuvB subunits; this complex drives branch migration. In the full resolvosome a probable DNA-RuvA(4)-RuvB(12)-RuvC(2) complex forms which resolves the HJ.

It is found in the cytoplasm. It catalyses the reaction ATP + H2O = ADP + phosphate + H(+). Its function is as follows. The RuvA-RuvB-RuvC complex processes Holliday junction (HJ) DNA during genetic recombination and DNA repair, while the RuvA-RuvB complex plays an important role in the rescue of blocked DNA replication forks via replication fork reversal (RFR). RuvA specifically binds to HJ cruciform DNA, conferring on it an open structure. The RuvB hexamer acts as an ATP-dependent pump, pulling dsDNA into and through the RuvAB complex. RuvB forms 2 homohexamers on either side of HJ DNA bound by 1 or 2 RuvA tetramers; 4 subunits per hexamer contact DNA at a time. Coordinated motions by a converter formed by DNA-disengaged RuvB subunits stimulates ATP hydrolysis and nucleotide exchange. Immobilization of the converter enables RuvB to convert the ATP-contained energy into a lever motion, pulling 2 nucleotides of DNA out of the RuvA tetramer per ATP hydrolyzed, thus driving DNA branch migration. The RuvB motors rotate together with the DNA substrate, which together with the progressing nucleotide cycle form the mechanistic basis for DNA recombination by continuous HJ branch migration. Branch migration allows RuvC to scan DNA until it finds its consensus sequence, where it cleaves and resolves cruciform DNA. The chain is Holliday junction branch migration complex subunit RuvB from Corynebacterium glutamicum (strain R).